The sequence spans 129 residues: Small ribosomal subunit protein uS11 (129 aa).

This sequence belongs to the universal ribosomal protein uS11 family. In terms of assembly, part of the 30S ribosomal subunit. Interacts with proteins S7 and S18. Binds to IF-3.

Located on the platform of the 30S subunit, it bridges several disparate RNA helices of the 16S rRNA. Forms part of the Shine-Dalgarno cleft in the 70S ribosome. This is Small ribosomal subunit protein uS11 from Jannaschia sp. (strain CCS1).